The primary structure comprises 193 residues: Ribosomal RNA small subunit methyltransferase G (193 aa).

S-adenosyl-L-methionine contacts are provided by residues glycine 72, phenylalanine 77, 123-124, and arginine 137; that span reads IE.

This sequence belongs to the methyltransferase superfamily. RNA methyltransferase RsmG family.

It is found in the cytoplasm. It catalyses the reaction guanosine(527) in 16S rRNA + S-adenosyl-L-methionine = N(7)-methylguanosine(527) in 16S rRNA + S-adenosyl-L-homocysteine. Functionally, specifically methylates the N7 position of guanine in position 527 of 16S rRNA. The chain is Ribosomal RNA small subunit methyltransferase G from Wolinella succinogenes (strain ATCC 29543 / DSM 1740 / CCUG 13145 / JCM 31913 / LMG 7466 / NCTC 11488 / FDC 602W) (Vibrio succinogenes).